Consider the following 380-residue polypeptide: Cytochrome b (380 aa).

A run of 4 helical transmembrane segments spans residues 34–54 (FGSL…LLAM), 78–99 (WLIR…YLHI), 114–134 (WNTG…GYVL), and 179–199 (FFAL…IHLT). Residues H84 and H98 each contribute to the heme b site. Heme b is bound by residues H183 and H197. H202 contacts a ubiquinone. The next 4 membrane-spanning stretches (helical) occupy residues 227-247 (LKDI…ALFS), 289-309 (LGGV…PFLH), 321-341 (LSQL…WVGS), and 348-368 (FIII…ILFP).

This sequence belongs to the cytochrome b family. As to quaternary structure, the cytochrome bc1 complex contains 11 subunits: 3 respiratory subunits (MT-CYB, CYC1 and UQCRFS1), 2 core proteins (UQCRC1 and UQCRC2) and 6 low-molecular weight proteins (UQCRH/QCR6, UQCRB/QCR7, UQCRQ/QCR8, UQCR10/QCR9, UQCR11/QCR10 and a cleavage product of UQCRFS1). This cytochrome bc1 complex then forms a dimer. It depends on heme b as a cofactor.

It localises to the mitochondrion inner membrane. Functionally, component of the ubiquinol-cytochrome c reductase complex (complex III or cytochrome b-c1 complex) that is part of the mitochondrial respiratory chain. The b-c1 complex mediates electron transfer from ubiquinol to cytochrome c. Contributes to the generation of a proton gradient across the mitochondrial membrane that is then used for ATP synthesis. The polypeptide is Cytochrome b (MT-CYB) (Thalassoica antarctica (Antarctic petrel)).